A 612-amino-acid polypeptide reads, in one-letter code: FAD-linked oxidoreductase notD' (612 aa).

The N-terminal stretch at 1–19 (MRDIRELLLVLFTSCLALG) is a signal peptide. Residues asparagine 50, asparagine 86, and asparagine 109 are each glycosylated (N-linked (GlcNAc...) asparagine). Residues 124–307 (GQGRIPRYSA…TSITMPVFGA (184 aa)) form the FAD-binding PCMH-type domain. Residues asparagine 311 and asparagine 396 are each glycosylated (N-linked (GlcNAc...) asparagine).

This sequence belongs to the oxygen-dependent FAD-linked oxidoreductase family. Requires FAD as cofactor.

It functions in the pathway alkaloid biosynthesis. In terms of biological role, FAD-linked oxidoreductase; part of the gene cluster that mediates the biosynthesis of notoamide, a fungal indole alkaloid that belongs to a family of natural products containing a characteristic bicyclo[2.2.2]diazaoctane core. The first step of notoamide biosynthesis involves coupling of L-proline and L-tryptophan by the bimodular NRPS notE', to produce cyclo-L-tryptophan-L-proline called brevianamide F. The reverse prenyltransferase notF' then acts as a deoxybrevianamide E synthase and converts brevianamide F to deoxybrevianamide E via reverse prenylation at C-2 of the indole ring leading to the bicyclo[2.2.2]diazaoctane core. Deoxybrevianamide E is further hydroxylated at C-6 of the indole ring, likely catalyzed by the cytochrome P450 monooxygenase notG', to yield 6-hydroxy-deoxybrevianamide E. 6-hydroxy-deoxybrevianamide E is a specific substrate of the prenyltransferase notC' for normal prenylation at C-7 to produce 6-hydroxy-7-prenyl-deoxybrevianamide, also called notoamide S. As the proposed pivotal branching point in notoamide biosynthesis, notoamide S can be diverted to notoamide E through an oxidative pyran ring closure putatively catalyzed by either notH' cytochrome P450 monooxygenase or the notD' FAD-linked oxidoreductase. This step would be followed by an indole 2,3-epoxidation-initiated pinacol-like rearrangement catalyzed by the notB' FAD-dependent monooxygenase leading to the formation of notoamide C and notoamide D. On the other hand notoamide S is converted to notoamide T by notH' (or notD'), a bifunctional oxidase that also functions as the intramolecular Diels-Alderase responsible for generation of (-)-notoamide T. To generate antipodal (+)-notoaminide T, notH (or notD) in Aspergillus strain MF297-2 is expected to catalyze a Diels-Alder reaction leading to the opposite stereochemistry. The remaining oxidoreductase notD' (or notH') likely catalyzes the oxidative pyran ring formation to yield (-)-stephacidin A. The FAD-dependent monooxygenase notI' is highly similar to notB' and is predicted to catalyze a similar conversion from (-)-stephacidin A to (+)-notoamide B via the 2,3-epoxidation of (-)-stephacidin A followed by a pinacol-type rearrangement. Finally, it remains unclear which enzyme could be responsible for the final hydroxylation steps leading to notoamide A and sclerotiamide. This Aspergillus versicolor protein is FAD-linked oxidoreductase notD'.